We begin with the raw amino-acid sequence, 462 residues long: UDP-N-acetylmuramoylalanine--D-glutamate ligase (462 aa).

Position 125–131 (Gly-125–Thr-131) interacts with ATP.

This sequence belongs to the MurCDEF family.

The protein resides in the cytoplasm. The catalysed reaction is UDP-N-acetyl-alpha-D-muramoyl-L-alanine + D-glutamate + ATP = UDP-N-acetyl-alpha-D-muramoyl-L-alanyl-D-glutamate + ADP + phosphate + H(+). Its pathway is cell wall biogenesis; peptidoglycan biosynthesis. Functionally, cell wall formation. Catalyzes the addition of glutamate to the nucleotide precursor UDP-N-acetylmuramoyl-L-alanine (UMA). The protein is UDP-N-acetylmuramoylalanine--D-glutamate ligase of Clostridium acetobutylicum (strain ATCC 824 / DSM 792 / JCM 1419 / IAM 19013 / LMG 5710 / NBRC 13948 / NRRL B-527 / VKM B-1787 / 2291 / W).